Here is a 71-residue protein sequence, read N- to C-terminus: uncharacterized protein (71 aa).

The helical transmembrane segment at 12–32 threads the bilayer; that stretch reads FLVSIAFFGLAPTIPLLAIAL.

The protein resides in the membrane. This is an uncharacterized protein from Sinorhizobium fredii (strain NBRC 101917 / NGR234).